Here is a 194-residue protein sequence, read N- to C-terminus: Ras-like protein RAS1 (194 aa).

A GTP-binding site is contributed by 16-23 (GAGGVGKS). The Effector region motif lies at 38–46 (YDPTIEDSY). GTP-binding positions include 63-67 (DTAGQ) and 122-125 (NKVD). Cys-191 carries the post-translational modification Cysteine methyl ester. Cys-191 carries the S-geranylgeranyl cysteine lipid modification. The propeptide at 192–194 (TLL) is removed in mature form.

This sequence belongs to the small GTPase superfamily. Ras family.

The protein resides in the cell membrane. It catalyses the reaction GTP + H2O = GDP + phosphate + H(+). Its activity is regulated as follows. Alternates between an inactive form bound to GDP and an active form bound to GTP. Activated by a guanine nucleotide-exchange factor (GEF) and inactivated by a GTPase-activating protein (GAP). Its function is as follows. Ras proteins bind GDP/GTP and possess intrinsic GTPase activity. The protein is Ras-like protein RAS1 (RAS1) of Hydra vulgaris (Hydra).